The chain runs to 251 residues: Meso-2,3-butanediol dehydrogenase (251 aa).

NAD(+) is bound by residues N15, M17, D36, D60, V61, and N87. (R)-acetoin-binding residues include S138, S140, and Y151. Residue S138 coordinates (S)-acetoin. Residues Y151, K155, V184, and T186 each coordinate NAD(+). Residue Y151 coordinates (S)-acetoin. Y151 functions as the Proton acceptor in the catalytic mechanism.

The protein belongs to the short-chain dehydrogenases/reductases (SDR) family. Homotetramer; dimer of dimers.

The catalysed reaction is (R,S)-butane-2,3-diol + NAD(+) = (R)-acetoin + NADH + H(+). The enzyme catalyses (S,S)-butane-2,3-diol + NAD(+) = (S)-acetoin + NADH + H(+). It carries out the reaction (S)-acetoin + NAD(+) = diacetyl + NADH + H(+). With respect to regulation, oxidation of meso-2,3-butanediol is enhanced in the presence of Fe(2+). Reduction of diacetyl and (3S/3R)-acetoin is slightly enhanced in the presence of Mg(2+) and Mn(2+). Activity is inhibited by several metal ions, particularly Fe(3+) for reduction of diacetyl and acetoin. Functionally, catalyzes the NAD-dependent oxidation of meso-2,3-butanediol to (3R)-acetoin, and of (2S,3S)-2,3-butanediol to (3S)-acetoin, with much lower efficiency. Can also oxidize several primary alcohols such as glycerol, 1-2-pentanediol and 1,2-propanediol, with lower activity. Cannot use (2R,3R)-2,3-butanediol. In the presence of NADH, catalyzes the reduction of (3R)-acetoin to meso-2,3-butanediol, of (3S)-acetoin to (2S,3S)-2,3-butanediol and of diacetyl to (3S)-acetoin. No activity is detected with NADPH/NADP(+). The sequence is that of Meso-2,3-butanediol dehydrogenase from Serratia marcescens.